The following is a 115-amino-acid chain: Probable 4-amino-4-deoxy-L-arabinose-phosphoundecaprenol flippase subunit ArnE (115 aa).

The next 4 membrane-spanning stretches (helical) occupy residues 1–21 (MIVGYLLVVLVSLLTCGGQLC), 43–63 (WLALAVLLLGLGMAVWLNVLQ), 65–85 (LPLSLAYPTLSLNFVLVTLAA), and 93–113 (TTARHWYGVASIMLGILLMSI). The EamA domain maps to 44–113 (LALAVLLLGL…IMLGILLMSI (70 aa)).

The protein belongs to the ArnE family. In terms of assembly, heterodimer of ArnE and ArnF.

The protein localises to the cell inner membrane. It functions in the pathway bacterial outer membrane biogenesis; lipopolysaccharide biosynthesis. Translocates 4-amino-4-deoxy-L-arabinose-phosphoundecaprenol (alpha-L-Ara4N-phosphoundecaprenol) from the cytoplasmic to the periplasmic side of the inner membrane. This chain is Probable 4-amino-4-deoxy-L-arabinose-phosphoundecaprenol flippase subunit ArnE, found in Serratia proteamaculans (strain 568).